A 133-amino-acid chain; its full sequence is uncharacterized protein (133 aa).

This sequence belongs to the mimivirus L87/L94 family.

This is an uncharacterized protein from Acanthamoeba polyphaga mimivirus (APMV).